The primary structure comprises 875 residues: Metal transporter CNNM2 (875 aa).

Residues 1–250 (MIGCGACEPE…TKMIVGEEKK (250 aa)) lie on the Extracellular side of the membrane. Asparagine 112 carries N-linked (GlcNAc...) asparagine glycosylation. The disordered stretch occupies residues 121-149 (TEHERRRHTPSERGLGGPAPPEPDSGPQR). Residues 251-271 (FLLPFWLQVIFISLLLCLSGM) form a helical membrane-spanning segment. One can recognise a CNNM transmembrane domain in the interval 251 to 431 (FLLPFWLQVI…DPYNDLVKEE (181 aa)). The Cytoplasmic segment spans residues 272–313 (FSGLNLGLMALDPMELRIVQNCGTEKEKNYAKRIEPVRRQGN). Residues 314-334 (YLLCSLLLGNVLVNTTLTILL) constitute an intramembrane region (helical). Topologically, residues 335–338 (DDIA) are cytoplasmic. Residues 339 to 359 (GSGLVAVVVSTIGIVIFGEIV) form a helical membrane-spanning segment. Residues 360–368 (PQAICSRHG) are Extracellular-facing. Residues 369 to 389 (LAVGANTIFLTKFFMMMTFPA) traverse the membrane as a helical segment. Over 390 to 875 (SYPVSKLLDC…NHSLHSEGAI (486 aa)) the chain is Cytoplasmic. CBS domains are found at residues 450–511 (MTPL…CTPL) and 518–584 (YNHP…ILDE). The disordered stretch occupies residues 741–763 (AGSPGENKSPPRPCGLNHSDSLS). Serine 761 is subject to Phosphoserine.

This sequence belongs to the ACDP family. As to quaternary structure, isoform 1 and isoform 2 may interact with each other. In terms of processing, the N-terminus is cleaved within the endoplasmic reticulum. The signal peptidase complex seems to be involved in the processing, but the exact cleavage site has not been identified. In terms of tissue distribution, widely expressed, with highest levels in kidney, lung, spleen and testis. In the kidney, predominantly expressed in the distal convoluted tubule and, at lower levels, in the connecting tubule (at protein level).

The protein localises to the cell membrane. In terms of biological role, divalent metal cation transporter. Mediates transport of divalent metal cations in an order of Mg(2+) &gt; Co(2+) &gt; Mn(2+) &gt; Sr(2+) &gt; Ba(2+) &gt; Cu(2+) &gt; Fe(2+). This chain is Metal transporter CNNM2 (Cnnm2), found in Mus musculus (Mouse).